We begin with the raw amino-acid sequence, 836 residues long: Spliceosome associated factor 3, U4/U6 recycling protein (836 aa).

HAT repeat units lie at residues 127–163 (EDFKFCRDVCSKALENLGTRYDSGGHIWLIFLEYEMS), 296–329 (KLPQVAVKVYSRALRHCPYSFVLHQQALLAFERD), 331–367 (RPNEEIDALWERARSNVINSAEEGRSLYRTYAFLLRR), 418–451 (KNMDKCRNIWNDILASGFGRFAGKWIEAVRLERQ), and 453–486 (GDKENARKYLNKALNSVSDNINEIYMYYVQFERE). Residues 507 to 585 (RAIRPQKKVS…APGSFAVQKA (79 aa)) are disordered. The span at 540–550 (IVKKVKGDDGG) shows a compositional bias: basic and acidic residues. Positions 558 to 579 (SNAKSSSAVSSSNASSTPAPGS) are enriched in low complexity. RRM domains lie at 593-668 (RTIF…ANDP) and 683-760 (SKVF…LSNP). 2 disordered regions span residues 757 to 786 (LSNPPVKKDKSHGKPAAIGASLEEDGPRKG) and 811 to 830 (AMDVSEGTSTSQPLSNDQFR). The segment covering 816–827 (EGTSTSQPLSND) has biased composition (polar residues).

In terms of assembly, forms a complex composed of sart-3, terminal uridylyltransferase usip-1 and U6 snRNA; complex formation is mediated by usip-1 and sart-3 binding to U6 snRNA. Associates with U4 and U6 snRNP complexes, probably by interacting with U4 and U6 snRNAs. Ubiquitously expressed.

It localises to the nucleus. The protein localises to the nucleoplasm. Its function is as follows. U6 snRNP-binding protein that functions as a recycling factor of the splicing machinery. Promotes the initial reassembly of U4 and U6 snRNPs following their ejection from the spliceosome during its maturation. The chain is Spliceosome associated factor 3, U4/U6 recycling protein from Caenorhabditis elegans.